Reading from the N-terminus, the 254-residue chain is tRNA (guanine-N(1)-)-methyltransferase (254 aa).

S-adenosyl-L-methionine contacts are provided by residues Gly117 and 136–141 (LGDFVL).

The protein belongs to the RNA methyltransferase TrmD family. Homodimer.

Its subcellular location is the cytoplasm. It catalyses the reaction guanosine(37) in tRNA + S-adenosyl-L-methionine = N(1)-methylguanosine(37) in tRNA + S-adenosyl-L-homocysteine + H(+). In terms of biological role, specifically methylates guanosine-37 in various tRNAs. This is tRNA (guanine-N(1)-)-methyltransferase from Levilactobacillus brevis (strain ATCC 367 / BCRC 12310 / CIP 105137 / JCM 1170 / LMG 11437 / NCIMB 947 / NCTC 947) (Lactobacillus brevis).